Reading from the N-terminus, the 330-residue chain is Aspartate--ammonia ligase (330 aa).

The protein belongs to the class-II aminoacyl-tRNA synthetase family. AsnA subfamily.

Its subcellular location is the cytoplasm. The catalysed reaction is L-aspartate + NH4(+) + ATP = L-asparagine + AMP + diphosphate + H(+). Its pathway is amino-acid biosynthesis; L-asparagine biosynthesis; L-asparagine from L-aspartate (ammonia route): step 1/1. The chain is Aspartate--ammonia ligase from Shigella boydii serotype 18 (strain CDC 3083-94 / BS512).